Consider the following 258-residue polypeptide: 14-3-3 protein homolog (258 aa).

This sequence belongs to the 14-3-3 family.

This Encephalitozoon cuniculi (strain GB-M1) (Microsporidian parasite) protein is 14-3-3 protein homolog.